Reading from the N-terminus, the 254-residue chain is Segregation and condensation protein A (254 aa).

It belongs to the ScpA family. In terms of assembly, component of a cohesin-like complex composed of ScpA, ScpB and the Smc homodimer, in which ScpA and ScpB bind to the head domain of Smc. The presence of the three proteins is required for the association of the complex with DNA.

It is found in the cytoplasm. In terms of biological role, participates in chromosomal partition during cell division. May act via the formation of a condensin-like complex containing Smc and ScpB that pull DNA away from mid-cell into both cell halves. The polypeptide is Segregation and condensation protein A (Brevibacillus brevis (strain 47 / JCM 6285 / NBRC 100599)).